The chain runs to 376 residues: Peroxisomal targeting signal 2 receptor (376 aa).

WD repeat units follow at residues 58–98, 102–142, 182–222, 226–267, 279–319, and 339–376; these read DTQD…YPVM, EHQR…NTSL, DNND…PLFM, AHNG…PNVH, GHEF…TSRV, and AHTEFVMGCDWSLWGEPGWVVTTGWDEMVYVWNTQRLQ.

It belongs to the WD repeat peroxin-7 family. Interacts with PEX20. Post-translationally, polyubiquitinated, leading to its degradation by the proteasome. Ubiquitination is dependent of PEX5 and PEX20 and takes place following recycling into the cytosol.

Its subcellular location is the cytoplasm. The protein localises to the cytosol. The protein resides in the peroxisome matrix. In terms of biological role, receptor required for the peroxisomal import of proteins containing a C-terminal PTS2-type peroxisomal targeting signal, such as 3-oxoacyl-CoA thiolase. Specifically binds to cargo proteins containing a PTS2 peroxisomal targeting signal in the cytosol. Cargo protein-binding triggers interaction with PEX20 and formation of a ternary complex composed of PEX20 and PEX7 along with PTS2-containing cargo proteins, which is tranlocated into peroxisomes by passing through the peroxisomal docking complex. PEX7 receptor is then retrotranslocated into the cytosol, where it is ubiquitinated and degraded. This is Peroxisomal targeting signal 2 receptor from Komagataella phaffii (strain GS115 / ATCC 20864) (Yeast).